A 193-amino-acid chain; its full sequence is Small COPII coat GTPase SAR1 (193 aa).

Residues F3–W5 carry the STAR; SAR1-N-terminal activation recruitment. Required for the activation and subsequent recruitment to ER membrane motif. Residues V11–L15 are mediates recruitment to ER membranes. D30 is a binding site for Mg(2+). The GDP site is built by N31, A32, G33, K34, T35, and T36. A GTP-binding site is contributed by N31. Residues G33, K34, T35, and T36 each contribute to the GTP site. D71 is a binding site for Mg(2+). Residues N130, K131, D133, V176, and L177 each coordinate GDP. Positions 130, 131, 133, 176, and 177 each coordinate GTP.

It belongs to the small GTPase superfamily. SAR1 family. In terms of assembly, homodimer; upon association with membrane. Part of the coat protein complex II/COPII, composed of SEC23/24 and SEC13/31 heterodimers, that it helps recruit and assemble on endoplasmic reticulum (ER) membranes at ER exit sites.

The protein localises to the endoplasmic reticulum membrane. The protein resides in the golgi apparatus. Its subcellular location is the golgi stack membrane. It is found in the cytoplasm. It localises to the cytosol. It carries out the reaction GTP + H2O = GDP + phosphate + H(+). Small GTPases activation is mediated by guanine exchange factors (GEF), while inactivation through hydrolysis of the bound GTP is stimulated by GTPase activating proteins (GAP). In terms of biological role, small GTPase that cycles between an active GTP-bound and an inactive GDP-bound state and mainly functions in vesicle-mediated endoplasmic reticulum (ER) to Golgi transport. The active GTP-bound form inserts into the endoplasmic reticulum membrane where it recruits the remainder of the coat protein complex II/COPII. The coat protein complex II assembling and polymerizing on endoplasmic reticulum membrane is responsible for both the sorting of cargos and the deformation and budding of membranes into vesicles destined to the Golgi. Plays a role in transporting the tyrosine kinase receptor let-23 from the endoplasmic reticulum to the plasma membrane of vulval precursor cells. In Caenorhabditis elegans, this protein is Small COPII coat GTPase SAR1.